The primary structure comprises 93 residues: ATP-dependent Clp protease adapter protein ClpS (93 aa).

It belongs to the ClpS family. As to quaternary structure, binds to the N-terminal domain of the chaperone ClpA.

Functionally, involved in the modulation of the specificity of the ClpAP-mediated ATP-dependent protein degradation. The sequence is that of ATP-dependent Clp protease adapter protein ClpS from Gloeobacter violaceus (strain ATCC 29082 / PCC 7421).